Here is a 451-residue protein sequence, read N- to C-terminus: CCAAT/enhancer-binding protein (451 aa).

3 disordered regions span residues 210 to 236 (TYNN…EPID), 267 to 298 (QSNN…NSTN), and 328 to 389 (LKHH…AKVR). Low complexity-rich tracts occupy residues 218–228 (ENSSVGSDSSS), 268–298 (SNNL…NSTN), and 334–350 (LQQT…QHAQ). Residues 359–370 (KHVDKGTEEYRR) are compositionally biased toward basic and acidic residues. A bZIP domain is found at 365–428 (TEEYRRRRER…SLHKQIYMQL (64 aa)). The interval 369–398 (RRRRERNNIAVRKSREKAKVRSKEVEERVK) is basic motif. Residues 400 to 407 (LLKEKDAL) form a leucine-zipper region.

Belongs to the bZIP family. C/EBP subfamily. In terms of assembly, binds DNA as a dimer and can form stable heterodimers.

It is found in the nucleus. In terms of biological role, may be required for the expression of gene products mediating border cell migration. Among the DNA sequences that this protein binds with high affinity is a conserved site within the promoter of its gene. The chain is CCAAT/enhancer-binding protein (slbo) from Drosophila virilis (Fruit fly).